The following is a 315-amino-acid chain: Olfactory receptor 56A3 (315 aa).

Topologically, residues 1 to 29 (MTTHRNDTLSTEASDFLLNCFVRSPSWQH) are extracellular. Asn6 is a glycosylation site (N-linked (GlcNAc...) asparagine). Residues 30–50 (WLSLPLSLLFLLAVGANTTLL) form a helical membrane-spanning segment. The Cytoplasmic portion of the chain corresponds to 51-58 (MTIWLEAS). The helical transmembrane segment at 59–79 (LHQPLYYLLSLLSLLDIVLCL) threads the bilayer. At 80-103 (TVIPKVLTIFWFDLRPISFPACFL) the chain is on the extracellular side. Cys101 and Cys193 form a disulfide bridge. A helical membrane pass occupies residues 104–124 (QMYIMNCFLAMESCTFMVMAY). The Cytoplasmic portion of the chain corresponds to 125–143 (DRYVAICHPLRYPSIITDH). Residues 144–164 (FVVKAAMFILTRNVLMTLPIP) traverse the membrane as a helical segment. The Extracellular portion of the chain corresponds to 165 to 200 (ILSAQLRYCGRNVIENCICANMSVSRLSCDDVTINH). Residue Asn185 is glycosylated (N-linked (GlcNAc...) asparagine). The helical transmembrane segment at 201–221 (LYQFAGGWTLLGSDLILIFLS) threads the bilayer. The Cytoplasmic portion of the chain corresponds to 222 to 241 (YTFILRAVLRLKAEGAVAKA). Residues 242 to 262 (LSTCGSHFMLILFFSTILLVF) form a helical membrane-spanning segment. Residues 263–277 (VLTHVAKKKVSPDVP) are Extracellular-facing. The chain crosses the membrane as a helical span at residues 278 to 298 (VLLNVLHHVIPAALNPIIYGV). Residues 299 to 315 (RTQEIKQGMQRLLKKGC) lie on the Cytoplasmic side of the membrane.

The protein belongs to the G-protein coupled receptor 1 family.

It localises to the cell membrane. Its function is as follows. Odorant receptor. The protein is Olfactory receptor 56A3 (OR56A3) of Homo sapiens (Human).